The chain runs to 300 residues: Erythroblast NAD(P)(+)--arginine ADP-ribosyltransferase (300 aa).

Residues 1–22 form the signal peptide; sequence MEEPLLHAILGLVLLLSTRTDA. Cystine bridges form between C51–C260 and C159–C208. In terms of domain architecture, TR mART core spans 70-256; it reads ETFAEGWRSA…IQLRSQGKSS (187 aa). 3 residues coordinate NAD(+): Y107, R164, and Q183. R164 is an active-site residue. S186 is a catalytic residue. Residue S217 participates in NAD(+) binding. Residue E224 is part of the active site. The disordered stretch occupies residues 276-300; that stretch reads SADKSSPLPRSPWPGWAPLAAPHSH.

This sequence belongs to the Arg-specific ADP-ribosyltransferase family.

It catalyses the reaction L-arginyl-[protein] + NAD(+) = N(omega)-(ADP-D-ribosyl)-L-arginyl-[protein] + nicotinamide + H(+). This is Erythroblast NAD(P)(+)--arginine ADP-ribosyltransferase (MADPRT) from Gallus gallus (Chicken).